A 497-amino-acid chain; its full sequence is Probable cytosol aminopeptidase (497 aa).

Mn(2+)-binding residues include Lys267 and Asp272. The active site involves Lys279. 3 residues coordinate Mn(2+): Asp290, Asp349, and Glu351. Arg353 is an active-site residue.

This sequence belongs to the peptidase M17 family. The cofactor is Mn(2+).

Its subcellular location is the cytoplasm. It catalyses the reaction Release of an N-terminal amino acid, Xaa-|-Yaa-, in which Xaa is preferably Leu, but may be other amino acids including Pro although not Arg or Lys, and Yaa may be Pro. Amino acid amides and methyl esters are also readily hydrolyzed, but rates on arylamides are exceedingly low.. The enzyme catalyses Release of an N-terminal amino acid, preferentially leucine, but not glutamic or aspartic acids.. In terms of biological role, presumably involved in the processing and regular turnover of intracellular proteins. Catalyzes the removal of unsubstituted N-terminal amino acids from various peptides. The sequence is that of Probable cytosol aminopeptidase from Nitrosomonas eutropha (strain DSM 101675 / C91 / Nm57).